Consider the following 613-residue polypeptide: ATP-dependent RNA helicase DeaD (613 aa).

The Q motif signature appears at 5 to 33 (ITFNDLGLPEFILKAVSDLGFETPSPIQQ). The Helicase ATP-binding domain occupies 36 to 207 (IPHLLNGNDV…KRFMNDPQEV (172 aa)). Residue 49 to 56 (AQTGSGKT) participates in ATP binding. The short motif at 155 to 158 (DEAD) is the DEAD box element. Residues 231–378 (KNEALLRFLE…EVELPNHLVL (148 aa)) enclose the Helicase C-terminal domain. Disordered stretches follow at residues 434-476 (ILPP…PQPM) and 552-613 (AVKS…RSSF). Composition is skewed to basic and acidic residues over residues 440 to 469 (PMEKRRRERNDRGDRRENPRSAERRGERKG) and 556 to 613 (DNSR…RSSF).

Belongs to the DEAD box helicase family. DeaD/CsdA subfamily.

Its subcellular location is the cytoplasm. The catalysed reaction is ATP + H2O = ADP + phosphate + H(+). Its function is as follows. DEAD-box RNA helicase involved in various cellular processes at low temperature, including ribosome biogenesis, mRNA degradation and translation initiation. The chain is ATP-dependent RNA helicase DeaD from Haemophilus influenzae (strain ATCC 51907 / DSM 11121 / KW20 / Rd).